A 947-amino-acid chain; its full sequence is Glutamate receptor 2.8 (947 aa).

The signal sequence occupies residues 1 to 26 (MNPKKNNNTFLSYFVCLFLLLEVGLG). Residues 27–577 (QNQISEIKVG…NTWVFLKPWG (551 aa)) lie on the Extracellular side of the membrane. N-linked (GlcNAc...) asparagine glycosylation is found at asparagine 42, asparagine 118, asparagine 333, asparagine 341, asparagine 348, asparagine 420, asparagine 478, and asparagine 524. The chain crosses the membrane as a helical span at residues 578 to 598 (LDLWVTTACFFVLIGFVVWLF). At 599 to 607 (EHRVNTDFR) the chain is on the cytoplasmic side. The helical transmembrane segment at 608–628 (GPPHHQIGTSFWFSFSTMVFA) threads the bilayer. The Cytoplasmic segment spans residues 629 to 632 (HREK). The helical transmembrane segment at 633–653 (VVSNLARFVVVVWCFVVLVLT) threads the bilayer. Residues 654–819 (QSYTANLTSF…NRLSLRSFWG (166 aa)) lie on the Extracellular side of the membrane. Residues asparagine 659, asparagine 704, asparagine 723, and asparagine 779 are each glycosylated (N-linked (GlcNAc...) asparagine). Residues 820–840 (LFLIAGIASFLALLIFVFLFL) form a helical membrane-spanning segment. At 841–947 (YENRHTLCDD…ESDIECVVEQ (107 aa)) the chain is on the cytoplasmic side.

This sequence belongs to the glutamate-gated ion channel (TC 1.A.10.1) family. May form heteromers. In terms of tissue distribution, expressed predominantly in leaves.

Its subcellular location is the membrane. Glutamate-gated receptor that probably acts as a non-selective cation channel. May be involved in light-signal transduction and calcium homeostasis via the regulation of calcium influx into cells. The sequence is that of Glutamate receptor 2.8 (GLR2.8) from Arabidopsis thaliana (Mouse-ear cress).